We begin with the raw amino-acid sequence, 553 residues long: Tether containing UBX domain for GLUT4 (553 aa).

A2 carries the post-translational modification N-acetylalanine. The span at 182–202 (PGSLGSSASAGQAAASAPLPL) shows a compositional bias: low complexity. The interval 182 to 324 (PGSLGSSASA…REPVDREPVV (143 aa)) is disordered. S184 is modified (phosphoserine). Over residues 206–217 (ELSRGDLSRPED) the composition is skewed to basic and acidic residues. Over residues 260–280 (RPLTSSSAKLPKSLSSPGGPS) the composition is skewed to low complexity. Position 275 is a phosphoserine (S275). Positions 296-324 (EQERERDPQQEQERERPVDREPVDREPVV) are enriched in basic and acidic residues. The segment at 317–380 (PVDREPVVCH…LVTKAFREAQ (64 aa)) is interaction with GLUT4. One can recognise a UBX domain in the interval 386–462 (ERYPKVALRV…NLFPAALVHL (77 aa)). The interval 499–536 (GSPSPLPAPDPAPKSEPAAEEGALVPPEPIPGTAQPVK) is disordered. 2 positions are modified to phosphoserine: S500 and S502. Residues 502-512 (SPLPAPDPAPK) are compositionally biased toward pro residues.

In terms of assembly, interacts with GLUT4. Interacts with VCPKMT. Interacts with VCP. In terms of tissue distribution, ubiquitous. Highly expressed in testis, heart, skeletal muscle and pancreas.

The protein resides in the endomembrane system. Its subcellular location is the endoplasmic reticulum-Golgi intermediate compartment membrane. The protein localises to the cytoplasm. It is found in the nucleus. Functionally, tethering protein that sequesters GLUT4-containing vesicles in the cytoplasm in the absence of insulin. Modulates the amount of GLUT4 that is available at the cell surface. Enhances VCP methylation catalyzed by VCPKMT. This is Tether containing UBX domain for GLUT4 (ASPSCR1) from Homo sapiens (Human).